Here is a 310-residue protein sequence, read N- to C-terminus: Fe-S cluster assembly protein dre2 (310 aa).

Disordered regions lie at residues 1–30 (MAPSFVSIDTTPDFDMTPTSSKSADSGKRT) and 165–184 (APAPAPVVQPPPIISSDDND). An N-terminal SAM-like domain region spans residues 24 to 154 (ADSGKRTLLL…KMDVGNGAAV (131 aa)). The linker stretch occupies residues 155–202 (PLRLGRKKKAAPAPAPVVQPPPIISSDDNDLNDDELIDEDTLLSADDL). Residues 167-177 (APAPVVQPPPI) are compositionally biased toward pro residues. Residues Cys-212, Cys-223, Cys-226, and Cys-228 each coordinate [2Fe-2S] cluster. The tract at residues 212–228 (CQPKAGKRRRACKDCTC) is fe-S binding site A. [4Fe-4S] cluster-binding residues include Cys-273, Cys-276, Cys-284, and Cys-287. 2 consecutive short sequence motifs (cx2C motif) follow at residues 273–276 (CGNC) and 284–287 (CDGC). Residues 273–287 (CGNCALGDAFRCDGC) form a fe-S binding site B region.

This sequence belongs to the anamorsin family. As to quaternary structure, monomer. Interacts with tah18. Interacts with mia40. It depends on [2Fe-2S] cluster as a cofactor. [4Fe-4S] cluster is required as a cofactor.

It is found in the cytoplasm. The protein resides in the mitochondrion intermembrane space. Its function is as follows. Component of the cytosolic iron-sulfur (Fe-S) protein assembly (CIA) machinery required for the maturation of extramitochondrial Fe-S proteins. Part of an electron transfer chain functioning in an early step of cytosolic Fe-S biogenesis, facilitating the de novo assembly of a [4Fe-4S] cluster on the scaffold complex cfd1-nbp35. Electrons are transferred to dre2 from NADPH via the FAD- and FMN-containing protein tah18. Tah18-dre2 are also required for the assembly of the diferric tyrosyl radical cofactor of ribonucleotide reductase (RNR), probably by providing electrons for reduction during radical cofactor maturation in the catalytic small subunit rnr2. In Emericella nidulans (strain FGSC A4 / ATCC 38163 / CBS 112.46 / NRRL 194 / M139) (Aspergillus nidulans), this protein is Fe-S cluster assembly protein dre2.